Here is a 408-residue protein sequence, read N- to C-terminus: Branched-chain amino acid aminotransferase 2, chloroplastic (408 aa).

The transit peptide at 1 to 58 directs the protein to the chloroplast; it reads MDCAAALLPGFHPNYLLCPSRHFSSLLPKTDLSSPLKFQLQNKQLSLASSHGFSPVIC. Arginine 152 is a binding site for pyridoxal 5'-phosphate. Catalysis depends on lysine 254, which acts as the Proton acceptor. Lysine 254 is modified (N6-(pyridoxal phosphate)lysine). Glutamate 290 is a binding site for pyridoxal 5'-phosphate.

This sequence belongs to the class-IV pyridoxal-phosphate-dependent aminotransferase family. Pyridoxal 5'-phosphate is required as a cofactor. As to expression, expressed in lupulin glands and leaves.

Its subcellular location is the plastid. The protein localises to the chloroplast. The catalysed reaction is L-isoleucine + 2-oxoglutarate = (S)-3-methyl-2-oxopentanoate + L-glutamate. The enzyme catalyses L-leucine + 2-oxoglutarate = 4-methyl-2-oxopentanoate + L-glutamate. It catalyses the reaction L-valine + 2-oxoglutarate = 3-methyl-2-oxobutanoate + L-glutamate. Its pathway is amino-acid biosynthesis; L-isoleucine biosynthesis; L-isoleucine from 2-oxobutanoate: step 4/4. It functions in the pathway amino-acid biosynthesis; L-leucine biosynthesis; L-leucine from 3-methyl-2-oxobutanoate: step 4/4. It participates in amino-acid biosynthesis; L-valine biosynthesis; L-valine from pyruvate: step 4/4. Converts 2-oxo acids to branched-chain amino acids. Shows no kinetic preferences corresponding to anabolic or catabolic functions, but likely involved in BCAA biosynthesis. In Humulus lupulus (European hop), this protein is Branched-chain amino acid aminotransferase 2, chloroplastic.